Here is a 60-residue protein sequence, read N- to C-terminus: Large ribosomal subunit protein uL30 (60 aa).

Belongs to the universal ribosomal protein uL30 family. As to quaternary structure, part of the 50S ribosomal subunit.

The polypeptide is Large ribosomal subunit protein uL30 (Moorella thermoacetica (strain ATCC 39073 / JCM 9320)).